The chain runs to 129 residues: ALK and LTK ligand 1 (129 aa).

Residues 1-27 (MRPLKPGAPLPALFLLALALSPHGAHG) form the signal peptide. Residues 24-63 (GAHGRPRGRRGARVTDKEPKPLLFLPAAGAGRTPSGSRSA) form a disordered region. The segment covering 25-35 (AHGRPRGRRGA) has biased composition (basic residues). Intrachain disulfides connect Cys90-Cys126 and Cys104-Cys113.

This sequence belongs to the ALKAL family. Widely expressed with highest levels in thyroid and moderate levels in stomach, trachea, small intestine, prostate and brain.

It localises to the secreted. The protein localises to the cell membrane. Functionally, cytokine that acts as a physiological ligand for receptor tyrosine kinase LTK, leading to its activation. Monomeric ALKAL1 binds to LTK, leading to LTK homodimerization and activation. In contrast to ALKAL2, does not act as a potent physiological ligand for ALK. In Homo sapiens (Human), this protein is ALK and LTK ligand 1.